Consider the following 339-residue polypeptide: Heat-inducible transcription repressor HrcA (339 aa).

Belongs to the HrcA family.

Functionally, negative regulator of class I heat shock genes (grpE-dnaK-dnaJ and groELS operons). Prevents heat-shock induction of these operons. This chain is Heat-inducible transcription repressor HrcA, found in Methylobacillus flagellatus (strain ATCC 51484 / DSM 6875 / VKM B-1610 / KT).